Here is a 206-residue protein sequence, read N- to C-terminus: ATP-dependent Clp protease proteolytic subunit (206 aa).

Residue S101 is the Nucleophile of the active site. The active site involves H126.

It belongs to the peptidase S14 family. In terms of assembly, component of the chloroplastic Clp protease core complex.

It is found in the plastid. Its subcellular location is the chloroplast stroma. The enzyme catalyses Hydrolysis of proteins to small peptides in the presence of ATP and magnesium. alpha-casein is the usual test substrate. In the absence of ATP, only oligopeptides shorter than five residues are hydrolyzed (such as succinyl-Leu-Tyr-|-NHMec, and Leu-Tyr-Leu-|-Tyr-Trp, in which cleavage of the -Tyr-|-Leu- and -Tyr-|-Trp bonds also occurs).. Cleaves peptides in various proteins in a process that requires ATP hydrolysis. Has a chymotrypsin-like activity. Plays a major role in the degradation of misfolded proteins. This Solanum lycopersicum (Tomato) protein is ATP-dependent Clp protease proteolytic subunit.